The sequence spans 179 residues: Probable galaptin lec-7 (179 aa).

One can recognise a Galectin domain in the interval 11–138 (SVYQIEENLK…SVDIESIVFK (128 aa)).

The sequence is that of Probable galaptin lec-7 (lec-7) from Caenorhabditis elegans.